Consider the following 672-residue polypeptide: Spermatid perinuclear RNA-binding protein (672 aa).

The DZF domain maps to 5–363 (RSFANDDRHV…ALKRPFEDGL (359 aa)). The disordered stretch occupies residues 349–371 (GAGSSALKRPFEDGLGDDKDPNK). Positions 357-371 (RPFEDGLGDDKDPNK) are enriched in basic and acidic residues. The DRBM 1 domain occupies 387–453 (DLMNALMRLN…AVKVLQAMGY (67 aa)). The span at 467–476 (DEKSDNESKN) shows a compositional bias: basic and acidic residues. The segment at 467–514 (DEKSDNESKNDTVSSNSSNNTGNSTTETSSTLEVRTQGPILTASGKNP) is disordered. The segment covering 477–497 (DTVSSNSSNNTGNSTTETSST) has biased composition (low complexity). One can recognise a DRBM 2 domain in the interval 510–576 (SGKNPVMELN…ALAALEKLFS (67 aa)). An asymmetric dimethylarginine mark is found at arginine 612 and arginine 617.

Interacts with EIF2AK2. Associates with microtubules; it is unsure whether such interaction is direct or indirect. In terms of tissue distribution, isoform 2 is expressed in spermatocytes (at protein level). Expressed in testis, thymus, ovary, liver, kidney, heart, spleen and brain. Expressed in cortex, dentate gyrus and Purkinje cell layer and granule cells of the cerebellum.

It is found in the cytoplasm. It localises to the cytoskeleton. Involved in spermatogenesis and sperm function. Plays a role in regulation of cell growth. Binds to double-stranded DNA and RNA. Binds most efficiently to poly(I:C) RNA than to poly(dI:dC) DNA. Also binds to single-stranded poly(G) RNA. Binds non-specifically to the mRNA PRM1 3'-UTR and adenovirus VA RNA. This Mus musculus (Mouse) protein is Spermatid perinuclear RNA-binding protein (Strbp).